Reading from the N-terminus, the 213-residue chain is Uridine kinase (213 aa).

14–21 (GASASGKS) contributes to the ATP binding site.

This sequence belongs to the uridine kinase family.

Its subcellular location is the cytoplasm. The catalysed reaction is uridine + ATP = UMP + ADP + H(+). It catalyses the reaction cytidine + ATP = CMP + ADP + H(+). Its pathway is pyrimidine metabolism; CTP biosynthesis via salvage pathway; CTP from cytidine: step 1/3. The protein operates within pyrimidine metabolism; UMP biosynthesis via salvage pathway; UMP from uridine: step 1/1. In Vibrio cholerae serotype O1 (strain ATCC 39315 / El Tor Inaba N16961), this protein is Uridine kinase.